The chain runs to 149 residues: Macrodomain Ter protein (149 aa).

Belongs to the MatP family. As to quaternary structure, homodimer.

The protein resides in the cytoplasm. Required for spatial organization of the terminus region of the chromosome (Ter macrodomain) during the cell cycle. Prevents early segregation of duplicated Ter macrodomains during cell division. Binds specifically to matS, which is a 13 bp signature motif repeated within the Ter macrodomain. This chain is Macrodomain Ter protein, found in Vibrio cholerae serotype O1 (strain ATCC 39315 / El Tor Inaba N16961).